A 272-amino-acid chain; its full sequence is NH(3)-dependent NAD(+) synthetase (272 aa).

Tyr-33 provides a ligand contact to deamido-NAD(+). Residues 45–52 (GISGGQDS), Arg-79, and Gln-85 each bind ATP. Asp-51 contacts Mg(2+). Arg-138 is a deamido-NAD(+) binding site. Thr-158 is an ATP binding site. Glu-163 serves as a coordination point for Mg(2+). Deamido-NAD(+) contacts are provided by Lys-171 and Asp-178. Lys-187 and Thr-209 together coordinate ATP. Deamido-NAD(+)-binding positions include Glu-224 and 258 to 259 (HK).

It belongs to the NAD synthetase family. As to quaternary structure, homodimer. Post-translationally, phosphorylated during sporulation.

The catalysed reaction is deamido-NAD(+) + NH4(+) + ATP = AMP + diphosphate + NAD(+) + H(+). Its pathway is cofactor biosynthesis; NAD(+) biosynthesis; NAD(+) from deamido-NAD(+) (ammonia route): step 1/1. Its function is as follows. Catalyzes the ATP-dependent amidation of deamido-NAD to form NAD. Uses ammonia as a nitrogen source. In Bacillus subtilis (strain 168), this protein is NH(3)-dependent NAD(+) synthetase.